Consider the following 393-residue polypeptide: NAD(P)H-quinone oxidoreductase subunit H, chloroplastic (393 aa).

Belongs to the complex I 49 kDa subunit family. As to quaternary structure, NDH is composed of at least 16 different subunits, 5 of which are encoded in the nucleus.

It is found in the plastid. Its subcellular location is the chloroplast thylakoid membrane. The catalysed reaction is a plastoquinone + NADH + (n+1) H(+)(in) = a plastoquinol + NAD(+) + n H(+)(out). The enzyme catalyses a plastoquinone + NADPH + (n+1) H(+)(in) = a plastoquinol + NADP(+) + n H(+)(out). Its function is as follows. NDH shuttles electrons from NAD(P)H:plastoquinone, via FMN and iron-sulfur (Fe-S) centers, to quinones in the photosynthetic chain and possibly in a chloroplast respiratory chain. The immediate electron acceptor for the enzyme in this species is believed to be plastoquinone. Couples the redox reaction to proton translocation, and thus conserves the redox energy in a proton gradient. In Ipomoea purpurea (Common morning glory), this protein is NAD(P)H-quinone oxidoreductase subunit H, chloroplastic.